Consider the following 391-residue polypeptide: ATP-sensitive inward rectifier potassium channel 1 (391 aa).

Residues Met1–Trp77 are Cytoplasmic-facing. The residue at position 44 (Ser44) is a Phosphoserine; by SGK1. The helical transmembrane segment at Arg78–Val102 threads the bilayer. Residues Ala103–Gly127 lie on the Extracellular side of the membrane. Asn117 is a glycosylation site (N-linked (GlcNAc...) asparagine). Residues Met128 to Gln139 constitute an intramembrane region (helical; Pore-forming). The pore-forming intramembrane region spans Val140–Phe146. Positions Thr141 to Phe146 match the Selectivity filter motif. The Extracellular portion of the chain corresponds to Arg147–Thr155. The helical transmembrane segment at Ala156 to Ala177 threads the bilayer. The Cytoplasmic portion of the chain corresponds to Ile178–Met391. Positions Ala180–Leu207 are polyphosphoinositide (PIP2)-binding. Residue Gly223–Leu230 coordinates ATP.

Belongs to the inward rectifier-type potassium channel (TC 1.A.2.1) family. KCNJ1 subfamily. In terms of assembly, interacts with SGK1 and SLC9A3R2/NHERF2. Post-translationally, phosphorylation at Ser-44 by SGK1 is necessary for its expression at the cell membrane. Mainly in kidney (renal cortex, medulla and papilla). In terms of tissue distribution, kidney.

It localises to the cell membrane. It carries out the reaction K(+)(in) = K(+)(out). With respect to regulation, inhibited by WNK3. Activated by phosphatidylinositol 4,5 biphosphate (PtdIns(4,5)P2). In terms of biological role, inward rectifier potassium channels are characterized by a greater tendency to allow potassium to flow into the cell rather than out of it. Their voltage dependence is regulated by the concentration of extracellular potassium; as external potassium is raised, the voltage range of the channel opening shifts to more positive voltages. The inward rectification is mainly due to the blockage of outward current by internal magnesium. This channel is activated by internal ATP and can be blocked by external barium. In the kidney, probably plays a major role in potassium homeostasis. Its function is as follows. Inward rectifier potassium channels are characterized by a greater tendency to allow potassium to flow into the cell rather than out of it. Their voltage dependence is regulated by the concentration of extracellular potassium; as external potassium is raised, the voltage range of the channel opening shifts to more positive voltages. This Rattus norvegicus (Rat) protein is ATP-sensitive inward rectifier potassium channel 1 (Kcnj1).